A 267-amino-acid chain; its full sequence is Large ribosomal subunit protein uL4 (267 aa).

The protein belongs to the universal ribosomal protein uL4 family. As to quaternary structure, part of the 50S ribosomal subunit.

Its function is as follows. One of the primary rRNA binding proteins, this protein initially binds near the 5'-end of the 23S rRNA. It is important during the early stages of 50S assembly. It makes multiple contacts with different domains of the 23S rRNA in the assembled 50S subunit and ribosome. Forms part of the polypeptide exit tunnel. The polypeptide is Large ribosomal subunit protein uL4 (Saccharolobus islandicus (strain L.S.2.15 / Lassen #1) (Sulfolobus islandicus)).